The primary structure comprises 2117 residues: Tudor domain-containing 6 (2117 aa).

Tudor domains are found at residues 62-118 (DGNP…FFYL), 291-350 (AENL…FFRM), 527-584 (KPVV…FQQL), 757-816 (EPLL…FLKM), and 974-1030 (PQTF…AGDI). Positions 1125–1216 (ASACKKESST…SSKPEVVKPK (92 aa)) are disordered. Basic and acidic residues predominate over residues 1127–1152 (ACKKESSTGPKRDAIDQVPKSRESHA). Polar residues-rich tracts occupy residues 1153–1174 (IQRS…STNG) and 1181–1209 (DSGT…TSSK). 2 consecutive Tudor domains span residues 1282 to 1340 (DIHE…FASF) and 1485 to 1543 (CMPV…LSDV).

Interacts (via Tudor domain) with buc (when dimethylated on arginine residues); and may be responsible for recruitment of different protein complexes to germ plasm.

It is found in the cytoplasm. Tudor domain-containing protein involved in germ cell development, more specifically the formation of chromatoid body (during spermiogenesis), Balbiani body (during oogenesis), germ plasm (upon fertilization), and for proper miRNA expression and spliceosome maturation. Required for Balbiani body and germ plasm formation and mobility through interaction with dimethylated arginines in the prion-like protein Bucky ball (buc). Coordinates transcript deposition into future primordial germ cells. Interacts with known germ plasm mRNAs such as vasa, dazl, nanos3 and hook2. The chain is Tudor domain-containing 6 from Danio rerio (Zebrafish).